The primary structure comprises 97 residues: Acylphosphatase (97 aa).

The 91-residue stretch at 7-97 (RLTAWVHGHV…QERFEGFVER (91 aa)) folds into the Acylphosphatase-like domain. Residues R22 and N40 contribute to the active site.

Belongs to the acylphosphatase family.

The enzyme catalyses an acyl phosphate + H2O = a carboxylate + phosphate + H(+). The sequence is that of Acylphosphatase (acyP) from Mycobacterium avium (strain 104).